A 157-amino-acid chain; its full sequence is Protein Smg (157 aa).

Belongs to the Smg family.

The polypeptide is Protein Smg (Buchnera aphidicola subsp. Schizaphis graminum (strain Sg)).